Reading from the N-terminus, the 283-residue chain is MKKKVLALGAAITLVAPLQSVAFAHENDGGQRFGVIPRWSAEDKHKEGVNSHLWIVNRAIDIMSRNTTLVKQDRVALLNEWRTELENGIYAADYENPYYDNSTFASHFYDPDNGKTYIPYAKQAKETGAKYFKLAGESYKNKDMKQAFFYLGLSLHYLGDVNQPMHAANFTNLSYPQGFHSKYENFVDTIKDNYKVTDGNGYWNWKGTNPEDWIHGAAVVAKQDYAGIVNDNTKDWFVRAAVSQEYADKWRAEVTPMTGKRLMDAQRVTAGYIQLWFDTYGNR.

The first 24 residues, 1–24 (MKKKVLALGAAITLVAPLQSVAFA), serve as a signal peptide directing secretion. A propeptide spanning residues 25 to 38 (HENDGGQRFGVIPR) is cleaved from the precursor. Zn(2+)-binding residues include Trp39, His52, Asp93, His107, His156, Asp160, His166, His180, and Glu184. The Zn-dependent PLC domain maps to 39–283 (WSAEDKHKEG…QLWFDTYGNR (245 aa)).

The protein belongs to the bacterial zinc-metallophospholipase C family. As to quaternary structure, monomer. Requires Zn(2+) as cofactor.

It catalyses the reaction a 1,2-diacyl-sn-glycero-3-phosphocholine + H2O = phosphocholine + a 1,2-diacyl-sn-glycerol + H(+). Functionally, required, with sphingomyelinase, to effect target cell lysis (hemolysis). The polypeptide is Phospholipase C (cerA) (Bacillus cereus).